The sequence spans 136 residues: Protein Tat (136 aa).

Residues 22–37 form a cysteine-rich region; that stretch reads CTNCYCKKCCFHCPVC. A core region spans residues 38-48; the sequence is FTKKALGISYG. The span at 48–57 shows a compositional bias: basic residues; sequence GRKRRGRKSA. A disordered region spans residues 48–136; that stretch reads GRKRRGRKSA…SGSSGSACKH (89 aa). The Nuclear localization signal, and RNA-binding (TAR) signature appears at 49–55; that stretch reads RKRRGRK. A compositionally biased stretch (polar residues) spans 58-73; that stretch reads VHSTNNQDPVRQQSLP. Over residues 104–120 the composition is skewed to low complexity; that stretch reads SSVSSGRTSGTSSSGYT. Polar residues predominate over residues 123–136; sequence FKTSSGSSGSACKH.

This sequence belongs to the lentiviruses Tat family. In terms of assembly, interacts with host CCNT1. Associates with the P-TEFb complex composed at least of Tat, P-TEFb (CDK9 and CCNT1), TAR RNA, RNA Pol II. Interacts with CCNT2; the resulting complex is unable to bind to TAR RNA.

The protein resides in the host nucleus. It is found in the host nucleolus. Its function is as follows. Transcriptional activator that increases RNA Pol II processivity, thereby increasing the level of full-length viral transcripts. Recognizes a hairpin structure at the 5'-LTR of the nascent viral mRNAs referred to as the transactivation responsive RNA element (TAR) and recruits the cyclin T1-CDK9 complex (P-TEFb complex) that will in turn hyperphosphorylate the RNA polymerase II to allow efficient elongation. The CDK9 component of P-TEFb and other Tat-activated kinases hyperphosphorylate the C-terminus of RNA Pol II that becomes stabilized and much more processive. Extracellular circulating Tat can be endocytosed by surrounding uninfected cells via the binding to several surface receptors. Endosomal low pH allows Tat to cross the endosome membrane to enter the cytosol and eventually further translocate into the nucleus, thereby inducing severe cell dysfunctions ranging from cell activation to cell death. Through. The polypeptide is Protein Tat (Simian immunodeficiency virus (isolate TAN1) (SIV-cpz)).